Consider the following 212-residue polypeptide: 3-oxo-tetronate 4-phosphate decarboxylase (212 aa).

Glu79 (proton acceptor) is an active-site residue. Glu79, His98, and His100 together coordinate Zn(2+). The active-site Proton donor is Tyr125. Position 165 (His165) interacts with Zn(2+).

Belongs to the aldolase class II family. AraD/FucA subfamily. It depends on Zn(2+) as a cofactor.

The catalysed reaction is 3-dehydro-4-O-phospho-D-erythronate + H(+) = dihydroxyacetone phosphate + CO2. The enzyme catalyses 3-dehydro-4-O-phospho-L-erythronate + H(+) = dihydroxyacetone phosphate + CO2. Catalyzes the decarboxylation of 3-oxo-tetronate 4-phosphate to dihydroxyacetone phosphate (DHAP) and CO(2). This is 3-oxo-tetronate 4-phosphate decarboxylase from Escherichia coli O6:H1 (strain CFT073 / ATCC 700928 / UPEC).